Here is a 395-residue protein sequence, read N- to C-terminus: Elongation factor Tu (395 aa).

In terms of domain architecture, tr-type G spans 10–205; the sequence is KPHVNVGTIG…VDNDIPIPPR (196 aa). Positions 19–26 are G1; it reads GHVDHGKT. 19 to 26 is a GTP binding site; sequence GHVDHGKT. Thr-26 is a Mg(2+) binding site. The G2 stretch occupies residues 60–64; sequence GITIN. The segment at 81-84 is G3; it reads DCPG. GTP-binding positions include 81–85 and 136–139; these read DCPGH and NKVD. Residues 136–139 form a G4 region; that stretch reads NKVD. The interval 174–176 is G5; the sequence is SAL.

Belongs to the TRAFAC class translation factor GTPase superfamily. Classic translation factor GTPase family. EF-Tu/EF-1A subfamily. Monomer.

It localises to the cytoplasm. The catalysed reaction is GTP + H2O = GDP + phosphate + H(+). In terms of biological role, GTP hydrolase that promotes the GTP-dependent binding of aminoacyl-tRNA to the A-site of ribosomes during protein biosynthesis. The sequence is that of Elongation factor Tu from Cytophaga hutchinsonii (strain ATCC 33406 / DSM 1761 / CIP 103989 / NBRC 15051 / NCIMB 9469 / D465).